A 218-amino-acid polypeptide reads, in one-letter code: Pyridoxine/pyridoxamine 5'-phosphate oxidase (218 aa).

Substrate-binding positions include 14–17 (RREY) and Lys-72. FMN is bound by residues 67–72 (RIVLLK), 82–83 (YT), Arg-88, Lys-89, and Gln-111. The substrate site is built by Tyr-129, Arg-133, and Ser-137. Residues 146–147 (QS) and Trp-191 contribute to the FMN site. 197-199 (RLH) is a binding site for substrate. Residue Arg-201 participates in FMN binding.

This sequence belongs to the pyridoxamine 5'-phosphate oxidase family. Homodimer. Requires FMN as cofactor.

It carries out the reaction pyridoxamine 5'-phosphate + O2 + H2O = pyridoxal 5'-phosphate + H2O2 + NH4(+). The catalysed reaction is pyridoxine 5'-phosphate + O2 = pyridoxal 5'-phosphate + H2O2. It participates in cofactor metabolism; pyridoxal 5'-phosphate salvage; pyridoxal 5'-phosphate from pyridoxamine 5'-phosphate: step 1/1. It functions in the pathway cofactor metabolism; pyridoxal 5'-phosphate salvage; pyridoxal 5'-phosphate from pyridoxine 5'-phosphate: step 1/1. In terms of biological role, catalyzes the oxidation of either pyridoxine 5'-phosphate (PNP) or pyridoxamine 5'-phosphate (PMP) into pyridoxal 5'-phosphate (PLP). The protein is Pyridoxine/pyridoxamine 5'-phosphate oxidase of Salmonella typhi.